We begin with the raw amino-acid sequence, 795 residues long: Probable diacylglycerol kinase 3 (795 aa).

2 consecutive EF-hand domains span residues 170–205 and 215–250; these read TPEN…MMNV and ELEQ…NIPL. Positions 183, 185, 187, 194, 228, 230, 232, and 239 each coordinate Ca(2+). 2 consecutive Phorbol-ester/DAG-type zinc fingers follow at residues 265 to 316 and 329 to 375; these read SHVW…ATNC and YHHW…AQEC. A DAGKc domain is found at 423-558; sequence NDCRPLLVLV…MDRWQIKIEI (136 aa).

Belongs to the eukaryotic diacylglycerol kinase family. In terms of assembly, monomer.

The catalysed reaction is a 1,2-diacyl-sn-glycerol + ATP = a 1,2-diacyl-sn-glycero-3-phosphate + ADP + H(+). In terms of biological role, involved in AFD-neuron mediated thermotaxis. Regulates behavior to environmental temperature. Thought to have a role in olfactory adaptation by affecting diacylglycerol levels. The polypeptide is Probable diacylglycerol kinase 3 (dgk-3) (Caenorhabditis elegans).